We begin with the raw amino-acid sequence, 1019 residues long: Probable LRR receptor-like serine/threonine-protein kinase At1g29720 (1019 aa).

The signal sequence occupies residues 1–19 (MSIILWSFFLFFTIILSSL). Topologically, residues 20 to 615 (TNITTLASFS…EKTKHHIKYP (596 aa)) are extracellular. N-linked (GlcNAc...) asparagine glycans are attached at residues Asn21, Asn79, and Asn90. LRR repeat units lie at residues 93 to 117 (ICRI…LTKL), 118 to 141 (PYLK…WAKM), 143 to 165 (YLTS…LQNF), 166 to 189 (KNLT…LGNL), 190 to 212 (TSLT…TLAR), 214 to 236 (VNLE…YIGN), 237 to 261 (WTRL…VVRL), 263 to 283 (NLLE…NLSS), 284 to 307 (KGLK…IWNL), 308 to 330 (TDLK…VQNP), 332 to 351 (KNIY…GGLL), 352 to 374 (NSQS…QKGS), and 375 to 398 (TINT…AVPA). Residues Asn153, Asn167, and Asn188 are each glycosylated (N-linked (GlcNAc...) asparagine). Asn225 and Asn236 each carry an N-linked (GlcNAc...) asparagine glycan. N-linked (GlcNAc...) asparagine glycosylation is found at Asn280 and Asn306. 4 N-linked (GlcNAc...) asparagine glycosylation sites follow: Asn363, Asn387, Asn469, and Asn558. Residues 616 to 636 (LILGASGALVTIVLLAVGIYA) traverse the membrane as a helical segment. Residues 637–1019 (RGIYRRDNNR…STVENSSSSL (383 aa)) are Cytoplasmic-facing. A Protein kinase domain is found at 673–946 (FDQANKLGEG…EAVKMLEGEI (274 aa)). Residues 679–687 (LGEGGFGSV) and Lys701 contribute to the ATP site. Tyr746 is modified (phosphotyrosine). The active-site Proton acceptor is the Asp797. Ser830 carries the post-translational modification Phosphoserine. 2 positions are modified to phosphothreonine: Thr831 and Thr836. Tyr844 is subject to Phosphotyrosine.

It belongs to the protein kinase superfamily. Ser/Thr protein kinase family.

It is found in the cell membrane. The enzyme catalyses L-seryl-[protein] + ATP = O-phospho-L-seryl-[protein] + ADP + H(+). It catalyses the reaction L-threonyl-[protein] + ATP = O-phospho-L-threonyl-[protein] + ADP + H(+). The protein is Probable LRR receptor-like serine/threonine-protein kinase At1g29720 (RFK1) of Arabidopsis thaliana (Mouse-ear cress).